A 1370-amino-acid chain; its full sequence is DNA-directed RNA polymerase subunit beta (1370 aa).

The protein belongs to the RNA polymerase beta chain family. In terms of assembly, the RNAP catalytic core consists of 2 alpha, 1 beta, 1 beta' and 1 omega subunit. When a sigma factor is associated with the core the holoenzyme is formed, which can initiate transcription.

The enzyme catalyses RNA(n) + a ribonucleoside 5'-triphosphate = RNA(n+1) + diphosphate. In terms of biological role, DNA-dependent RNA polymerase catalyzes the transcription of DNA into RNA using the four ribonucleoside triphosphates as substrates. In Bordetella bronchiseptica (strain ATCC BAA-588 / NCTC 13252 / RB50) (Alcaligenes bronchisepticus), this protein is DNA-directed RNA polymerase subunit beta.